Consider the following 140-residue polypeptide: Large ribosomal subunit protein uL22c (140 aa).

It belongs to the universal ribosomal protein uL22 family. As to quaternary structure, part of the 50S ribosomal subunit.

It localises to the plastid. Its subcellular location is the chloroplast. Functionally, this protein binds specifically to 23S rRNA. The globular domain of the protein is located near the polypeptide exit tunnel on the outside of the subunit, while an extended beta-hairpin is found that lines the wall of the exit tunnel in the center of the 70S ribosome. This Calycanthus floridus var. glaucus (Eastern sweetshrub) protein is Large ribosomal subunit protein uL22c (rpl22).